The primary structure comprises 108 residues: Tubulin-specific chaperone A (108 aa).

Alanine 2 is subject to N-acetylalanine.

The protein belongs to the TBCA family. In terms of assembly, supercomplex made of cofactors A to E. Cofactors A and D function by capturing and stabilizing tubulin in a quasi-native conformation. Cofactor E binds to the cofactor D-tubulin complex; interaction with cofactor C then causes the release of tubulin polypeptides that are committed to the native state.

It localises to the cytoplasm. Its subcellular location is the cytoskeleton. Functionally, tubulin-folding protein; involved in the early step of the tubulin folding pathway. This is Tubulin-specific chaperone A (TBCA) from Oryctolagus cuniculus (Rabbit).